The chain runs to 93 residues: Cobalt transport protein CbiN (93 aa).

2 helical membrane passes run 5–25 (LMLL…NHGG) and 63–83 (LLFT…LGYC).

It belongs to the CbiN family. In terms of assembly, forms an energy-coupling factor (ECF) transporter complex composed of an ATP-binding protein (A component, CbiO), a transmembrane protein (T component, CbiQ) and 2 possible substrate-capture proteins (S components, CbiM and CbiN) of unknown stoichimetry.

It is found in the cell inner membrane. It participates in cofactor biosynthesis; adenosylcobalamin biosynthesis. In terms of biological role, part of the energy-coupling factor (ECF) transporter complex CbiMNOQ involved in cobalt import. In Salmonella newport (strain SL254), this protein is Cobalt transport protein CbiN.